The primary structure comprises 500 residues: MHFISCCLRRSTVSIAVSRSLLVKRLFCSGWPGDDTIYSLSSGQGKCGVAVVRVSGPASALAVRRLTRSLPAPRTASLRSISHPQSKELLDRGLVLWFPGPASFTGEDSAEFHIHGGPAVISGVLQALGSLPGLRPAEAGEFTRRAFYAGKLDLTEVEGLSDLIHAETEAQRRQALRQMAGDLGRIYQDWTDQLKRCLAHVEAFIDFSEDELIEDGVLNDVDRAVQQLQTDMENHLSDERRGERLRSGVHVVIAGSTNAGKSSLLNLLTQRPAAIVSPTAGTTRDVLEVPLDIGGYPVLLSDTAGLRDTSDSVEQEGVRRARQRVEQADLSLVVVDLTQLPSERRHVPVFLRGHLKNILERSSQQQQHILILNESDLVSAEQQRSIQTSLQELSGAPSACFLSCHSRDGLEELLTLLHNTLKTLCGDPLIGSPTLTQTRHRTHLQKSIEALQQYHEYRDVDLALAAEGLRLGLLSLGRITGRVSPEEILDVIFRDFCIGK.

The N-terminal 73 residues, 1 to 73 (MHFISCCLRR…RRLTRSLPAP (73 aa)), are a transit peptide targeting the mitochondrion. 5,10-methylenetetrahydrofolate-binding residues include arginine 53, glutamate 111, and lysine 151. A TrmE-type G domain is found at 248 to 422 (GVHVVIAGST…LLTLLHNTLK (175 aa)). Residues 255–262 (GSTNAGKS), 281–285 (GTTRD), 302–305 (DTAG), and 373–376 (NESD) each bind GTP. Asparagine 258 lines the K(+) pocket. Positions 262 and 283 each coordinate Mg(2+). Position 500 (lysine 500) interacts with 5,10-methylenetetrahydrofolate.

It belongs to the TRAFAC class TrmE-Era-EngA-EngB-Septin-like GTPase superfamily. TrmE GTPase family. K(+) is required as a cofactor.

Its subcellular location is the mitochondrion. The enzyme catalyses GTP + H2O = GDP + phosphate + H(+). In terms of biological role, GTPase component of the GTPBP3-MTO1 complex that catalyzes the 5-taurinomethyluridine (taum(5)U) modification at the 34th wobble position (U34) of mitochondrial tRNAs (mt-tRNAs), which plays a role in mt-tRNA decoding and mitochondrial translation. Taum(5)U formation on mammalian mt-tRNA requires the presence of both GTPBP3-mediated GTPase activity and MTO1 catalytic activity. This is 5-taurinomethyluridine-[tRNA] synthase subunit GTPB3, mitochondrial (gtpbp3) from Danio rerio (Zebrafish).